The chain runs to 115 residues: MTIETFSWGIKVSSQPTEGSKDTVRKIQFGDGYAQVSGSGLNDEIRTYEFSFSGDPITANEIHAFLRRHKVKSFIFTPPFGDTALWRVEADTLKKVVKNVKVITVTATFEQAFAP.

This sequence belongs to the lambda-like tail tip protein M family.

The protein localises to the virion. It localises to the host cytoplasm. Functionally, part of the distal tail tip which plays a role in DNA ejection during entry, and in tail assembly initiation during exit. May bind tail tip complex associated with tape measure protein and allow tail tube protein polymerization on top of tail tip. The sequence is that of Tail tip protein M from Escherichia coli (Bacteriophage N15).